We begin with the raw amino-acid sequence, 935 residues long: Coiled-coil domain-containing protein 191 (935 aa).

Coiled coils occupy residues 189-324 (RLTM…ENQQ), 366-438 (YTRS…ALLK), 554-589 (RHVF…AEAQ), and 660-740 (KAME…LEAI). Disordered regions lie at residues 596-661 (SAVT…ILKA) and 678-715 (EKKK…RKRE).

The protein is Coiled-coil domain-containing protein 191 (CCDC191) of Macaca fascicularis (Crab-eating macaque).